The chain runs to 327 residues: Glutaminase (327 aa).

The substrate site is built by S92, N143, N195, Y218, Y263, and V281.

Belongs to the glutaminase family. Homotetramer.

The catalysed reaction is L-glutamine + H2O = L-glutamate + NH4(+). The chain is Glutaminase from Synechocystis sp. (strain ATCC 27184 / PCC 6803 / Kazusa).